The primary structure comprises 362 residues: Histidinol-phosphate aminotransferase (362 aa).

Lysine 218 carries the N6-(pyridoxal phosphate)lysine modification.

The protein belongs to the class-II pyridoxal-phosphate-dependent aminotransferase family. Histidinol-phosphate aminotransferase subfamily. As to quaternary structure, homodimer. The cofactor is pyridoxal 5'-phosphate.

It catalyses the reaction L-histidinol phosphate + 2-oxoglutarate = 3-(imidazol-4-yl)-2-oxopropyl phosphate + L-glutamate. It participates in amino-acid biosynthesis; L-histidine biosynthesis; L-histidine from 5-phospho-alpha-D-ribose 1-diphosphate: step 7/9. The chain is Histidinol-phosphate aminotransferase from Xanthomonas campestris pv. campestris (strain 8004).